The primary structure comprises 200 residues: ATP synthase subunit delta', mitochondrial (200 aa).

The N-terminal 21 residues, 1 to 21, are a transit peptide targeting the mitochondrion; it reads MFRHSSRLLARATTMGWRRPF.

It belongs to the ATPase epsilon chain family. F-type ATPases have 2 components, CF(1) - the catalytic core - and CF(0) - the membrane proton channel. CF(1) has five subunits: alpha(3), beta(3), gamma(1), delta(1), epsilon(1). CF(0) has three main subunits: a, b and c.

Its subcellular location is the mitochondrion. It is found in the mitochondrion inner membrane. Mitochondrial membrane ATP synthase (F(1)F(0) ATP synthase or Complex V) produces ATP from ADP in the presence of a proton gradient across the membrane which is generated by electron transport complexes of the respiratory chain. F-type ATPases consist of two structural domains, F(1) - containing the extramembraneous catalytic core, and F(0) - containing the membrane proton channel, linked together by a central stalk and a peripheral stalk. During catalysis, ATP turnover in the catalytic domain of F(1) is coupled via a rotary mechanism of the central stalk subunits to proton translocation. Part of the complex F(1) domain and of the central stalk which is part of the complex rotary element. Rotation of the central stalk against the surrounding alpha(3)beta(3) subunits leads to hydrolysis of ATP in three separate catalytic sites on the beta subunits. The protein is ATP synthase subunit delta', mitochondrial of Ipomoea batatas (Sweet potato).